We begin with the raw amino-acid sequence, 333 residues long: Protein FanF (333 aa).

The N-terminal stretch at 1 to 22 (MKNKYNLLFFLFLLCYGDVALA) is a signal peptide.

Three disulfide bonds are present.

The protein localises to the fimbrium. Minor component of K99 fimbriae. Is not required for binding of K99 fimbriae to the ganglioside receptor. May play a role in initiation, elongation and flexibility of the fimbriae. The polypeptide is Protein FanF (fanF) (Escherichia coli).